The chain runs to 533 residues: D-3-phosphoglycerate dehydrogenase (533 aa).

A2 carries the post-translational modification N-acetylalanine. At S14 the chain carries Phosphoserine. N6-acetyllysine; alternate is present on K21. Residue K21 forms a Glycyl lysine isopeptide (Lys-Gly) (interchain with G-Cter in SUMO1); alternate linkage. K21 is covalently cross-linked (Glycyl lysine isopeptide (Lys-Gly) (interchain with G-Cter in SUMO2); alternate). An N6-acetyllysine modification is found at K58. Residues T78, 155 to 156, D175, T207, 234 to 236, and D260 each bind NAD(+); these read RI and CAR. T78 carries the post-translational modification Phosphothreonine. R236 is an active-site residue. The active site involves E265. Residue H283 is the Proton donor of the active site. Position 283 to 286 (283 to 286) interacts with NAD(+); the sequence is HLGA.

This sequence belongs to the D-isomer specific 2-hydroxyacid dehydrogenase family. Homotetramer. In terms of tissue distribution, liver, kidney, brain, testis.

It carries out the reaction (2R)-3-phosphoglycerate + NAD(+) = 3-phosphooxypyruvate + NADH + H(+). It participates in amino-acid biosynthesis; L-serine biosynthesis; L-serine from 3-phospho-D-glycerate: step 1/3. Functionally, catalyzes the reversible oxidation of 3-phospho-D-glycerate to 3-phosphonooxypyruvate, the first step of the phosphorylated L-serine biosynthesis pathway. Does not catalyze the reversible oxidation of 2-hydroxyglutarate to 2-oxoglutarate and the reversible oxidation of (S)-malate to oxaloacetate. The sequence is that of D-3-phosphoglycerate dehydrogenase (Phgdh) from Rattus norvegicus (Rat).